Reading from the N-terminus, the 340-residue chain is 4-hydroxy-2-oxovalerate aldolase (340 aa).

The Pyruvate carboxyltransferase domain occupies 5–255; sequence IVITEVALRD…QTGVDLYKMM (251 aa). 13–14 provides a ligand contact to substrate; sequence RD. Position 14 (aspartate 14) interacts with Mn(2+). The active-site Proton acceptor is the histidine 17. Substrate is bound by residues serine 167 and histidine 194. Residues histidine 194 and histidine 196 each contribute to the Mn(2+) site. Tyrosine 285 serves as a coordination point for substrate.

The protein belongs to the 4-hydroxy-2-oxovalerate aldolase family.

The enzyme catalyses (S)-4-hydroxy-2-oxopentanoate = acetaldehyde + pyruvate. The protein is 4-hydroxy-2-oxovalerate aldolase of Brevibacillus brevis (strain 47 / JCM 6285 / NBRC 100599).